The primary structure comprises 141 residues: Hemoglobin subunit alpha (141 aa).

The Globin domain occupies 1-141 (VLSSADKNNV…VSTVLTSKYR (141 aa)). Residue S3 is modified to Phosphoserine. K7 and K11 each carry N6-succinyllysine. K16 carries the post-translational modification N6-acetyllysine; alternate. The residue at position 16 (K16) is an N6-succinyllysine; alternate. Y24 carries the post-translational modification Phosphotyrosine. Phosphoserine is present on S35. The residue at position 40 (K40) is an N6-succinyllysine. Position 49 is a phosphoserine (S49). Residue H58 coordinates O2. H87 provides a ligand contact to heme b. A Phosphoserine modification is found at S102. T108 is subject to Phosphothreonine. S124 bears the Phosphoserine mark. Phosphothreonine is present on residues T134 and T137. S138 is subject to Phosphoserine.

The protein belongs to the globin family. Heterotetramer of two alpha chains and two beta chains. In terms of tissue distribution, red blood cells.

Functionally, involved in oxygen transport from the lung to the various peripheral tissues. Hemopressin acts as an antagonist peptide of the cannabinoid receptor CNR1. Hemopressin-binding efficiently blocks cannabinoid receptor CNR1 and subsequent signaling. This is Hemoglobin subunit alpha (HBA) from Panthera tigris sumatrae (Sumatran tiger).